A 378-amino-acid polypeptide reads, in one-letter code: MSHLDNGFRSLTLQRFPATDDVNPLQAWEAADEYLLQQLDDTEIRGPVLILNDAFGALSCALAEHKPYSIGDSYISELATRENLRLNGIDESSVKFLDSTADYPQQPGVVLIKVPKTLALLEQQLRALRKVVTSDTRIIAGAKARDIHTSTLELFEKVLGPTTTTLAWKKARLINCTFNEPPLADAPQTVSWKLEGTDWTIHNHANVFSRTGLDIGARFFMQHLPENLEGEIVDLGCGNGVIGLTLLDKNPQAKVVFVDESPMAVASSRLNVETNMPEALDRSEFMINNALSGVEPFRFNAVLCNPPFHQQHALTDNVAWEMFHHARRCLKINGELYIVANRHLDYFHKLKKIFGNCTTIATNNKFVVLKAVKLGRRR.

The protein belongs to the methyltransferase superfamily. RlmG family.

The protein resides in the cytoplasm. It carries out the reaction guanosine(1835) in 23S rRNA + S-adenosyl-L-methionine = N(2)-methylguanosine(1835) in 23S rRNA + S-adenosyl-L-homocysteine + H(+). In terms of biological role, specifically methylates the guanine in position 1835 (m2G1835) of 23S rRNA. The polypeptide is Ribosomal RNA large subunit methyltransferase G (Shigella boydii serotype 4 (strain Sb227)).